The following is a 236-amino-acid chain: (5-formylfuran-3-yl)methyl phosphate synthase (236 aa).

The Schiff-base intermediate with substrate role is filled by lysine 27. Lysine 85 serves as the catalytic Proton acceptor.

The protein belongs to the MfnB family.

The catalysed reaction is 2 D-glyceraldehyde 3-phosphate = 4-(hydroxymethyl)-2-furancarboxaldehyde phosphate + phosphate + 2 H2O. The protein operates within cofactor biosynthesis; methanofuran biosynthesis. In terms of biological role, catalyzes the formation of 4-(hydroxymethyl)-2-furancarboxaldehyde phosphate (4-HFC-P) from two molecules of glyceraldehyde-3-P (GA-3-P). This is (5-formylfuran-3-yl)methyl phosphate synthase from Methanothermobacter thermautotrophicus (strain ATCC 29096 / DSM 1053 / JCM 10044 / NBRC 100330 / Delta H) (Methanobacterium thermoautotrophicum).